The chain runs to 1821 residues: PH-interacting protein (1821 aa).

Serine 136 is modified (phosphoserine). WD repeat units follow at residues 181-222 (GHLS…ATLR), 224-262 (HAAE…PLAV), 265-310 (GHSA…INPR), 319-360 (RPGV…KISE), and 363-402 (FHTD…WKSI). A Glycyl lysine isopeptide (Lys-Gly) (interchain with G-Cter in SUMO2) cross-link involves residue lysine 421. WD repeat units lie at residues 422 to 461 (ITKM…LIHV), 464 to 504 (GHED…KVRS), and 512 to 551 (QGHG…KYDK). A phosphoserine mark is found at serine 641, serine 659, serine 674, serine 677, serine 683, and serine 692. 2 disordered regions span residues 653–695 (EQDL…SGQI) and 782–927 (DLGD…RLAV). Residues 665 to 681 (SNASRVNRGSVSSTSEV) are compositionally biased toward polar residues. Basic and acidic residues predominate over residues 800 to 810 (SALEETPRPLE). Low complexity predominate over residues 841–854 (SDGSSSDYSSDYSD). Serine 879, serine 880, serine 881, and serine 911 each carry phosphoserine. Residues 912 to 924 (PKKKKPKERKQKR) show a composition bias toward basic residues. Residues 924 to 1129 (RLAVGELTEN…MELIPNNAVF (206 aa)) are mediates interaction with IRS1. The 108-residue stretch at 1156-1263 (WGANPRDEEC…DLLLHFIKDQ (108 aa)) folds into the Bromo 1 domain. Phosphoserine is present on residues serine 1281, serine 1283, and serine 1296. The segment at 1282–1310 (DSEEEEKDADVPGTSTRKRKDHQPRRRLR) is disordered. The span at 1297–1310 (TRKRKDHQPRRRLR) shows a compositional bias: basic residues. Serine 1315 bears the Phosphoserine mark. The Bromo 2 domain maps to 1316 to 1421 (YDIQAWKKQC…AFFEEHISSV (106 aa)). At threonine 1359 the chain carries Phosphothreonine. Serine 1405 is modified (phosphoserine). The span at 1435–1446 (NTISKKRKKRNR) shows a compositional bias: basic residues. Residues 1435-1507 (NTISKKRKKR…PESSSVVRTR (73 aa)) form a disordered region. The span at 1447 to 1457 (SSSLSSSAASS) shows a compositional bias: low complexity. A Glycyl lysine isopeptide (Lys-Gly) (interchain with G-Cter in SUMO1); alternate cross-link involves residue lysine 1470. Lysine 1470 is covalently cross-linked (Glycyl lysine isopeptide (Lys-Gly) (interchain with G-Cter in SUMO2); alternate). A compositionally biased stretch (polar residues) spans 1471-1482 (SEVSTSPFSIPT). At serine 1479 the chain carries Phosphoserine. Lysine 1497 is modified (N6-acetyllysine). Serine 1525 bears the Phosphoserine mark. Lysine 1533 carries the N6-acetyllysine modification. Positions 1556 to 1576 (STLSSPDPLTFSHATKNNSAK) are enriched in polar residues. Disordered regions lie at residues 1556–1596 (STLS…VFSK), 1623–1676 (QVNG…NSEQ), and 1740–1785 (RSNR…DSEE). Serine 1560 is subject to Phosphoserine. A Glycyl lysine isopeptide (Lys-Gly) (interchain with G-Cter in SUMO2) cross-link involves residue lysine 1644. Serine 1651 carries the post-translational modification Phosphoserine. Residue lysine 1670 forms a Glycyl lysine isopeptide (Lys-Gly) (interchain with G-Cter in SUMO2) linkage. Residues serine 1762 and serine 1783 each carry the phosphoserine modification.

In terms of assembly, interacts (via bromo domain) with acetylated lysine residues on histone H1.4, histone H3 and H4 (in vitro). Interacts with IRS1 and IRS2. In terms of tissue distribution, widely expressed with most abundant expression detected in pancreatic islets, brain and skeletal muscle. Predominantly expressed in developing and regenerating neurons. Expressed in adult brain (granular layer of the olfactorium bulb, hippocampus, dentate gyrus and cerebellum internal granular layer). Expressed in the CA3 region of adult hippocampus, adult and fetal retina, perinatal dorsal root ganglion and embryonal olfactory epithelia (at protein level).

Its subcellular location is the nucleus. In terms of biological role, probable regulator of the insulin and insulin-like growth factor signaling pathways. Stimulates cell proliferation through regulation of cyclin transcription and has an anti-apoptotic activity through AKT1 phosphorylation and activation. Plays a role in the regulation of cell morphology and cytoskeletal organization. This is PH-interacting protein (Phip) from Mus musculus (Mouse).